The sequence spans 75 residues: Nigwaprin-a (75 aa).

The N-terminal stretch at 1–24 (MSSGGLLLLLGLLTLWAELTPVSG) is a signal peptide. The region spanning 27–72 (RPVKPGLCPPRPQKPPCVKECKNDWSCRGEQKCCRYGCIYECRDPI) is the WAP domain. 4 disulfides stabilise this stretch: Cys-34–Cys-60, Cys-43–Cys-64, Cys-47–Cys-59, and Cys-53–Cys-68.

This sequence belongs to the venom waprin family. In terms of tissue distribution, expressed by the venom gland.

The protein resides in the secreted. Its function is as follows. Damages membranes of susceptible bacteria. Has no hemolytic activity. Not toxic to mice. Does not inhibit the proteinases elastase and cathepsin G. The polypeptide is Nigwaprin-a (Cryptophis nigrescens (Eastern small-eyed snake)).